The primary structure comprises 845 residues: SLIT and NTRK-like protein 2 (845 aa).

The first 21 residues, 1–21 (MLSGVWFLSVLTVAGILQTES), serve as a signal peptide directing secretion. Residues 22 to 621 (RKTAKDICKI…LHTEVPLSVL (600 aa)) are Extracellular-facing. Disulfide bonds link cysteine 29/cysteine 35 and cysteine 33/cysteine 46. 6 LRR repeats span residues 63–84 (RIYQLFLNGNLLTRLYPNEFVN), 87–108 (NAVTLHLGNNGLQEIRTGAFSG), 111–132 (TLKRLHLNNNKLEILREDTFLG), 135–156 (SLEYLQADYNYISAIEAGAFSK), 159–180 (KLKVLILNDNLLLSLPSNVFRF), and 182–203 (LLTHLDLRGNRLKVMPFAGVLE). A glycan (N-linked (GlcNAc...) asparagine) is linked at asparagine 84. A required for interaction with PTPRD region spans residues 167–215 (DNLLLSLPSNVFRFVLLTHLDLRGNRLKVMPFAGVLEHIGGIMEIQLEE). An LRRCT 1 domain is found at 216-265 (NPWNCTCDLLPLKAWLDTITVFVGEIVCETPFRLHGKDVTQLTRQDLCPR). 2 disulfides stabilise this stretch: cysteine 220/cysteine 243 and cysteine 222/cysteine 263. The tract at residues 263 to 321 (CPRKSASDSSQRGSHADTHVQRLSPTMNPALNPTRAPKASRPPKMRNRPTPRVTVSKDR) is disordered. Polar residues predominate over residues 283–293 (QRLSPTMNPAL). The LRRNT domain occupies 331–373 (QTKSPVPLTCPSSCVCTSQSSDNGLNVNCQERKFTNISDLQPK). LRR repeat units lie at residues 376–397 (SPKKLYLTGNYLQTVYKNDLLE), 400–421 (SLDLLHLGNNRIAVIQEGAFTN), 424–445 (SLRRLYLNGNYLEVLYPSMFDG), 448–469 (SLQYLYLEYNVIKEIKPLTFDA), 472–493 (NLQLLFLNNNLLRSLPDNIFGG), and 495–516 (ALTRLNLRNNHFSHLPVKGVLD). Residue asparagine 421 is glycosylated (N-linked (GlcNAc...) asparagine). The LRRCT 2 domain maps to 529 to 580 (NPWDCTCDIMGLKDWTEHANSPVIINEVTCESPAKHAGEILKFLGREAICPD). A helical transmembrane segment spans residues 622-642 (ILGLLVVFILSVCFGAGLFVF). At 643–845 (VLKRRKGVPS…LEKQTAISQL (203 aa)) the chain is on the cytoplasmic side. Tyrosine 756 is subject to Phosphotyrosine.

It belongs to the SLITRK family. As to quaternary structure, interacts with PTPRD; this interaction is PTPRD splicing-dependent and may induce pre-synaptic differentiation. Interacts with NTRK2. As to expression, expressed predominantly in the cerebral cortex of the brain but also at low levels in the spinal cord and medulla. Also expressed in some astrocytic brain tumors such as astrocytomas, oligodendrogliomas, glioblastomas, gangliogliomas and primitive neuroectodermal tumors.

It localises to the membrane. It is found in the cell membrane. The protein resides in the cell projection. Its subcellular location is the dendrite. In terms of biological role, it is involved in synaptogenesis and promotes excitatory synapse differentiation. Suppresses neurite outgrowth. Involved in the negative regulation of NTRK2. The polypeptide is SLIT and NTRK-like protein 2 (SLITRK2) (Homo sapiens (Human)).